The primary structure comprises 578 residues: Putative transporter B0361.11 (578 aa).

Residues 1–30 (MSISRRSYEQFDEMKSENQENNSKKKSSER) form a disordered region. 11 helical membrane passes run 51–71 (IFTY…MYIM), 148–168 (FGLT…SMLA), 182–202 (ILAF…IFLI), 232–252 (AWIT…TLLV), 263–283 (YFIV…LPES), 339–359 (IWLL…YFAI), 373–393 (AFLY…PLMM), 399–419 (MIVI…TVFL), 426–446 (LVIM…HPIW), 457–477 (SLCF…SPYV), and 486–506 (WIPF…AFML). Over residues 532–550 (AYRRSKSSSSSVSALSKTS) the composition is skewed to low complexity. Positions 532 to 561 (AYRRSKSSSSSVSALSKTSVRSKKTLSSES) are disordered.

It belongs to the major facilitator superfamily. Sugar transporter (TC 2.A.1.1) family.

The protein resides in the membrane. This chain is Putative transporter B0361.11, found in Caenorhabditis elegans.